A 335-amino-acid chain; its full sequence is CTD kinase subunit beta (335 aa).

2 consecutive Cyclin N-terminal domains span residues 26-151 (ILST…CFDF) and 158-241 (NYMV…LYMH). The interval 269–293 (KNSGRPQKPPQIDPHSSSLADEYRE) is disordered.

This sequence belongs to the cyclin family. As to quaternary structure, CTDK-I consists of three subunits, ctk1/lsk1, ctk2/lsc1 and ctk3 (also called alpha, beta and gamma). Interacts with ctk1/lsk1. This interaction is dependent on ctk1/lsk1 kinase activity.

The protein localises to the cytoplasm. It localises to the nucleus. Cyclin subunit of the CTDK-I complex, which hyperphosphorylates the C-terminal heptapeptide repeat domain (CTD) of the largest RNA polymerase II subunit. As part of the CTDK-I complex, involved in RNA polymerase II transcriptional elongation and pre-mRNA 3'-end processing. Together with ctk3, required for ctk1/lsk1 CTD kinase activation. Together with ctk1/lsk1, required for the regulation of cytokinesis by phosphorylating 'Ser-2' residues found in the heptad repeats of the CTD. This chain is CTD kinase subunit beta (lsc1), found in Schizosaccharomyces pombe (strain 972 / ATCC 24843) (Fission yeast).